The primary structure comprises 147 residues: Succinate dehydrogenase assembly factor 2, mitochondrial (147 aa).

Belongs to the SDHAF2 family. Interacts with the flavoprotein subunit within the SDH catalytic dimer.

The protein localises to the mitochondrion matrix. Its function is as follows. Plays an essential role in the assembly of succinate dehydrogenase (SDH), an enzyme complex (also referred to as respiratory complex II) that is a component of both the tricarboxylic acid (TCA) cycle and the mitochondrial electron transport chain, and which couples the oxidation of succinate to fumarate with the reduction of ubiquinone (coenzyme Q) to ubiquinol. Required for flavinylation (covalent attachment of FAD) of the flavoprotein subunit of the SDH catalytic dimer. This is Succinate dehydrogenase assembly factor 2, mitochondrial from Drosophila grimshawi (Hawaiian fruit fly).